The following is a 251-amino-acid chain: Insulin-induced gene 1 protein (251 aa).

The Cytoplasmic segment spans residues 1–58 (MQTLEEHCWSCSCTRGRDKKGTRLSTWLAQRAAKAMSSLNSLLSLAYHTLASSEGRSL). Residues 59 to 81 (IRRSLVLFAVGVFLALVLNLLQI) traverse the membrane as a helical segment. The Extracellular portion of the chain corresponds to 82–100 (QRNVTLFPEEVIATIFSSA). A helical transmembrane segment spans residues 101–118 (WWVPPCCGTAAAVVGLLY). Topologically, residues 119 to 133 (PCIDSHLGEPHKFKR) are cytoplasmic. A helical membrane pass occupies residues 134 to 156 (EWASVMRCIAVFVGINHASAKLD). Topologically, residues 157–159 (FAN) are extracellular. Residues 160–178 (NVQLSLTLAALSLGLWWTF) form a helical membrane-spanning segment. The Cytoplasmic portion of the chain corresponds to 179–183 (DRSRS). The chain crosses the membrane as a helical span at residues 184 to 205 (GLGLGITIAFLATLITQFLVYN). Topologically, residues 206–219 (GVYQYTSPDFLYIR) are extracellular. Residues 220 to 237 (SWLPCIFFSGGVTVGNIG) traverse the membrane as a helical segment. The Cytoplasmic segment spans residues 238–251 (RQLAMGSSEKTHSD). The KxHxx motif lies at 245–251 (SEKTHSD).

The protein belongs to the INSIG family. In terms of assembly, interacts with scap; interaction is direct and only takes place in the presence of sterols; it prevents interaction between scap and the coat protein complex II (COPII). Associates with the SCAP-SREBP complex; association is mediated via its interaction with scap and only takes place in the presence of sterols.

Its subcellular location is the endoplasmic reticulum membrane. Functionally, oxysterol-binding protein that mediates feedback control of cholesterol synthesis by controlling both endoplasmic reticulum to Golgi transport of scap and degradation of hmgcr. Acts as a negative regulator of cholesterol biosynthesis by mediating the retention of the SCAP-SREBP complex in the endoplasmic reticulum, thereby blocking the processing of sterol regulatory element-binding proteins (SREBPs). Binds oxysterol, including 25-hydroxycholesterol, regulating interaction with scap and retention of the SCAP-SREBP complex in the endoplasmic reticulum. In presence of oxysterol, interacts with scap, retaining the SCAP-SREBP complex in the endoplasmic reticulum, thereby preventing scap from escorting SREBPs to the Golgi. Sterol deprivation reduces oxysterol-binding, disrupting the interaction between insig1 and scap, thereby promoting Golgi transport of the SCAP-SREBP complex, followed by processing and nuclear translocation of SREBPs. Also regulates cholesterol synthesis by regulating degradation of hmgcr. This is Insulin-induced gene 1 protein from Xenopus tropicalis (Western clawed frog).